The chain runs to 608 residues: Protein SHQ1 homolog (608 aa).

2 disordered regions span residues 487-531 (DAGS…SFYS) and 543-608 (IVYE…ASTT). The span at 489–498 (GSQGSSPQQQ) shows a compositional bias: low complexity. Acidic residues-rich tracts occupy residues 502–524 (DDLD…DESV) and 543–579 (IVYE…EDDS). A compositionally biased stretch (polar residues) spans 588–608 (EAEGNSVIEQCSNSETAASTT).

It belongs to the SHQ1 family.

Required for the quantitative accumulation of H/ACA ribonucleoproteins (RNPs). In Drosophila melanogaster (Fruit fly), this protein is Protein SHQ1 homolog.